The following is a 978-amino-acid chain: Tyrosine-protein kinase transforming protein fms (978 aa).

Topologically, residues 1–543 (RMPSGPGHYG…IGAHTPLPDE (543 aa)) are extracellular. 5 consecutive Ig-like C2-type domains span residues 55 to 134 (PVIQ…IHLY), 141 to 231 (PWKV…KVQK), 236 to 331 (PATL…RVVE), 333 to 431 (AYSN…LTLR), and 434 to 533 (PEVR…WPIS). Cys-76 and Cys-118 are disulfide-bonded. N-linked (GlcNAc...) asparagine; by host glycans are attached at residues Asn-79, Asn-107, Asn-128, Asn-187, Asn-309, Asn-320, Asn-336, Asn-369, Asn-444, Asn-511, and Asn-524. 2 disulfides stabilise this stretch: Cys-161/Cys-211 and Cys-258/Cys-312. Cys-451 and Cys-516 are joined by a disulfide. A helical membrane pass occupies residues 544–568 (LLFTPVLLTCMSIMALLLLLLLLLL). The Cytoplasmic portion of the chain corresponds to 569–978 (YKYKQKPKYQ…PWQRTPPVAR (410 aa)). Residues 613–942 (LQFGKTLGTG…PTFQQICSLL (330 aa)) form the Protein kinase domain. Residues 619–627 (LGTGAFGKV) and Lys-647 contribute to the ATP site. Asp-810 (proton acceptor) is an active-site residue. A Phosphotyrosine; by autocatalysis modification is found at Tyr-841. A disordered region spans residues 952-978 (VPNYTNLPSSSSSRLLRPWQRTPPVAR). Residues 958-969 (LPSSSSSRLLRP) show a composition bias toward low complexity. Thr-973 is subject to Phosphothreonine.

It belongs to the protein kinase superfamily. Tyr protein kinase family. CSF-1/PDGF receptor subfamily.

It is found in the membrane. The catalysed reaction is L-tyrosyl-[protein] + ATP = O-phospho-L-tyrosyl-[protein] + ADP + H(+). In terms of biological role, truncated version of the receptor for colony-stimulating factor 1 (CSF-1). This chain is Tyrosine-protein kinase transforming protein fms (V-FMS), found in Felidae (cat family).